The chain runs to 283 residues: NAD kinase (283 aa).

Asp-66 (proton acceptor) is an active-site residue. NAD(+) contacts are provided by residues 66–67 (DG), 134–135 (ND), Arg-145, Arg-163, Asp-165, and 176–181 (TAYSMS).

The protein belongs to the NAD kinase family. It depends on a divalent metal cation as a cofactor.

It is found in the cytoplasm. The enzyme catalyses NAD(+) + ATP = ADP + NADP(+) + H(+). Functionally, involved in the regulation of the intracellular balance of NAD and NADP, and is a key enzyme in the biosynthesis of NADP. Catalyzes specifically the phosphorylation on 2'-hydroxyl of the adenosine moiety of NAD to yield NADP. The chain is NAD kinase from Chlorobaculum tepidum (strain ATCC 49652 / DSM 12025 / NBRC 103806 / TLS) (Chlorobium tepidum).